Reading from the N-terminus, the 383-residue chain is MLKHLLPLGTRDEFGRRARTKQHLIAVIQAHFKQRGLAPIATPLLENEAVFDPYQMGNYQLYRLFGNDGRTLVLRPDMTLPVARFISATNVPLPQKFGYVGDIFRVSRQLSGSYNQITQAGVELVGYASLKAEFECLTIANQLSSELIADAVEIELGDAQFAQRVVASLTGDEGEQQAILTALFDKQVPRYTKLIAKYRAQPLYDFLKAWPRLFGRPECIFKELAAAPLPETVQPSLKRLQTVVAWMQQTMPEQVISVDLSSQAPQKYYTGLTFRGYSQAGAGYLFSGGRYDKLLTNFQAEAEPAVGMGLNVDLLTTLATDQQTAYAEQLIYFEPEQWSQAEAYLAKQPHAILSLADDLAGARIEAQRLNAQLIDLTGGMTND.

Belongs to the class-II aminoacyl-tRNA synthetase family. HisZ subfamily. As to quaternary structure, heteromultimer composed of HisG and HisZ subunits.

Its subcellular location is the cytoplasm. Its pathway is amino-acid biosynthesis; L-histidine biosynthesis; L-histidine from 5-phospho-alpha-D-ribose 1-diphosphate: step 1/9. In terms of biological role, required for the first step of histidine biosynthesis. May allow the feedback regulation of ATP phosphoribosyltransferase activity by histidine. The chain is ATP phosphoribosyltransferase regulatory subunit from Lactiplantibacillus plantarum (strain ATCC BAA-793 / NCIMB 8826 / WCFS1) (Lactobacillus plantarum).